Consider the following 292-residue polypeptide: D-tagatose-1,6-bisphosphate aldolase subunit KbaY (292 aa).

Catalysis depends on Asp-82, which acts as the Proton donor. Positions 83 and 180 each coordinate Zn(2+). Gly-181 is a binding site for dihydroxyacetone phosphate. Zn(2+) is bound at residue His-208. Dihydroxyacetone phosphate contacts are provided by residues 209 to 211 (GAS) and 230 to 233 (NVAT).

It belongs to the class II fructose-bisphosphate aldolase family. TagBP aldolase KbaY subfamily. In terms of assembly, homotetramer. Forms a complex with KbaZ. Zn(2+) is required as a cofactor.

The catalysed reaction is D-tagatofuranose 1,6-bisphosphate = D-glyceraldehyde 3-phosphate + dihydroxyacetone phosphate. It functions in the pathway carbohydrate metabolism; D-tagatose 6-phosphate degradation; D-glyceraldehyde 3-phosphate and glycerone phosphate from D-tagatose 6-phosphate: step 2/2. Catalytic subunit of the tagatose-1,6-bisphosphate aldolase KbaYZ, which catalyzes the reversible aldol condensation of dihydroxyacetone phosphate (DHAP or glycerone-phosphate) with glyceraldehyde 3-phosphate (G3P) to produce tagatose 1,6-bisphosphate (TBP). Requires KbaZ subunit for full activity and stability. This Enterobacter sp. (strain 638) protein is D-tagatose-1,6-bisphosphate aldolase subunit KbaY.